We begin with the raw amino-acid sequence, 427 residues long: Imidazolonepropionase (427 aa).

Positions 81 and 83 each coordinate Fe(3+). 2 residues coordinate Zn(2+): H81 and H83. 3 residues coordinate 4-imidazolone-5-propanoate: R90, Y153, and H186. Y153 is an N-formimidoyl-L-glutamate binding site. H260 serves as a coordination point for Fe(3+). H260 is a binding site for Zn(2+). E263 serves as a coordination point for 4-imidazolone-5-propanoate. Residue D335 coordinates Fe(3+). D335 serves as a coordination point for Zn(2+). Residues N337 and G339 each coordinate N-formimidoyl-L-glutamate. A 4-imidazolone-5-propanoate-binding site is contributed by S340.

This sequence belongs to the metallo-dependent hydrolases superfamily. HutI family. The cofactor is Zn(2+). Requires Fe(3+) as cofactor.

The protein localises to the cytoplasm. The enzyme catalyses 4-imidazolone-5-propanoate + H2O = N-formimidoyl-L-glutamate. It functions in the pathway amino-acid degradation; L-histidine degradation into L-glutamate; N-formimidoyl-L-glutamate from L-histidine: step 3/3. Functionally, catalyzes the hydrolytic cleavage of the carbon-nitrogen bond in imidazolone-5-propanoate to yield N-formimidoyl-L-glutamate. It is the third step in the universal histidine degradation pathway. In Chloroflexus aggregans (strain MD-66 / DSM 9485), this protein is Imidazolonepropionase.